The chain runs to 831 residues: Phenylalanine--tRNA ligase beta subunit (831 aa).

A tRNA-binding domain is found at 44-155; that stretch reads GPVDGPVTVG…GAAEPGADGA (112 aa). Residues 414 to 489 enclose the B5 domain; it reads WSPPPIRMGV…RLEGLEVIPS (76 aa). 4 residues coordinate Mg(2+): Asp467, Asp473, Glu476, and Glu477. The region spanning 737–830 is the FDX-ACB domain; sequence SPYPAVFQDV…AAERVGAVLR (94 aa).

The protein belongs to the phenylalanyl-tRNA synthetase beta subunit family. Type 1 subfamily. As to quaternary structure, tetramer of two alpha and two beta subunits. It depends on Mg(2+) as a cofactor.

It is found in the cytoplasm. The catalysed reaction is tRNA(Phe) + L-phenylalanine + ATP = L-phenylalanyl-tRNA(Phe) + AMP + diphosphate + H(+). The polypeptide is Phenylalanine--tRNA ligase beta subunit (Mycobacterium bovis (strain ATCC BAA-935 / AF2122/97)).